We begin with the raw amino-acid sequence, 127 residues long: Ribonuclease P protein component 1 (127 aa).

This sequence belongs to the eukaryotic/archaeal RNase P protein component 1 family. As to quaternary structure, consists of a catalytic RNA component and at least 4 protein subunits. Forms a subcomplex with Rnp4 which stimulates the catalytic RNA.

The protein resides in the cytoplasm. The enzyme catalyses Endonucleolytic cleavage of RNA, removing 5'-extranucleotides from tRNA precursor.. Its function is as follows. Part of ribonuclease P, a protein complex that generates mature tRNA molecules by cleaving their 5'-ends. The RNA is catalytic, but its KM for pre-tRNA is 170-fold decreased in the presence of the 4 known protein subunits (Rnp1-4). The protein subunits also decrease the amount of Mg(2+) needed for activity. In Pyrococcus furiosus (strain ATCC 43587 / DSM 3638 / JCM 8422 / Vc1), this protein is Ribonuclease P protein component 1.